Here is a 226-residue protein sequence, read N- to C-terminus: Putative N-acetylmannosamine-6-phosphate 2-epimerase (226 aa).

The protein belongs to the NanE family.

The enzyme catalyses an N-acyl-D-glucosamine 6-phosphate = an N-acyl-D-mannosamine 6-phosphate. It participates in amino-sugar metabolism; N-acetylneuraminate degradation; D-fructose 6-phosphate from N-acetylneuraminate: step 3/5. Functionally, converts N-acetylmannosamine-6-phosphate (ManNAc-6-P) to N-acetylglucosamine-6-phosphate (GlcNAc-6-P). The chain is Putative N-acetylmannosamine-6-phosphate 2-epimerase from Mycoplasma mycoides subsp. mycoides SC (strain CCUG 32753 / NCTC 10114 / PG1).